The chain runs to 339 residues: MVREEITGSTQTLEWKCVESRVDSKRLYYGRFILSPLRKGQADTVGIALRRALLGEIEGTCITRAKFWNVPHEYSTIVGIEESIQEILLNLKEIVLRSNLYGVRDASICVKGPRYITAQDIILPPSVEIVDTTQPIANLREPVDFCIELQIKRDRGYHTELRKNSQDGSYPIDAVFMPVRNVNYSIFSCGNGNEKHEILFLEIWTNGSLTPKEALYEASRNLIDLFLPFIHTEEEGTSFEENKNRLTPPLLTFQKRFTNLKKNKKGIPLNCIFIDQLELPSRTYNCLKRANIHTLLDLLSKTEEDLMRINSFRMEDGKLIWDTLEKHLPIDLPKNKFSL.

Residues 1 to 233 (MVREEITGST…DLFLPFIHTE (233 aa)) form an alpha N-terminal domain (alpha-NTD) region. Residues 266–339 (GIPLNCIFID…IDLPKNKFSL (74 aa)) are alpha C-terminal domain (alpha-CTD).

It belongs to the RNA polymerase alpha chain family. In terms of assembly, in plastids the minimal PEP RNA polymerase catalytic core is composed of four subunits: alpha, beta, beta', and beta''. When a (nuclear-encoded) sigma factor is associated with the core the holoenzyme is formed, which can initiate transcription.

Its subcellular location is the plastid. The protein localises to the chloroplast. It carries out the reaction RNA(n) + a ribonucleoside 5'-triphosphate = RNA(n+1) + diphosphate. DNA-dependent RNA polymerase catalyzes the transcription of DNA into RNA using the four ribonucleoside triphosphates as substrates. The chain is DNA-directed RNA polymerase subunit alpha from Saccharum hybrid (Sugarcane).